Reading from the N-terminus, the 807-residue chain is ATP-binding cassette sub-family F member 1 (807 aa).

Residues 1-227 (MPKGPKQQPP…KEKAKKAEQM (227 aa)) form a disordered region. Ser22 is subject to Phosphoserine. Basic residues predominate over residues 29–39 (KKGKKDKKTKK). The segment covering 47–65 (VEDRQAGEEEKVLKEKEQQ) has biased composition (basic and acidic residues). The segment covering 73 to 85 (QKKKRDTRKGRRK) has biased composition (basic residues). Ser106 is subject to Phosphoserine. Residues Ser110 and Ser141 each carry the phosphoserine; by CK2 modification. Residues 148–161 (EKHPPKPAKPEKNR) are compositionally biased toward basic and acidic residues. At Ser167 the chain carries Phosphoserine. The span at 197–207 (LDDEEEQDEEE) shows a compositional bias: acidic residues. The span at 208 to 227 (IKEKEPPKQGKEKAKKAEQM) shows a compositional bias: basic and acidic residues. Residues 266 to 510 (IKLEKFSISA…MYQQKQKELL (245 aa)) enclose the ABC transporter 1 domain. 298–305 (GPNGKGKT) serves as a coordination point for ATP. The span at 521 to 542 (KELKAGGKSTKQAEKQTKEALT) shows a compositional bias: basic and acidic residues. Positions 521–564 (KELKAGGKSTKQAEKQTKEALTRKQQKCRRKNQDEESQEAPELL) are disordered. The residue at position 557 (Ser557) is a Phosphoserine. Residues 587–802 (LGLHGVTFGY…VLEALGEVMV (216 aa)) enclose the ABC transporter 2 domain. 620-627 (GPNGVGKS) lines the ATP pocket.

It belongs to the ABC transporter superfamily. ABCF family. EF3 subfamily. In terms of assembly, interacts (via N-terminus) with EIF2S1; the interaction is independent of its phosphorylated status. Associates (via both ABC transporter domains) with the ribosomes. In terms of processing, phosphorylated at phosphoserine and phosphothreonine. Phosphorylation on Ser-110 and Ser-141 by CK2; inhibits association of EIF2 with ribosomes.

It localises to the cytoplasm. It is found in the nucleus. Its subcellular location is the nucleoplasm. The protein resides in the nucleus envelope. Functionally, required for efficient Cap- and IRES-mediated mRNA translation initiation. Not involved in the ribosome biogenesis. This chain is ATP-binding cassette sub-family F member 1 (ABCF1), found in Sus scrofa (Pig).